The chain runs to 26 residues: Melittin (26 aa).

At G1 the chain carries N-formylglycine; partial. E26 carries the glutamic acid 1-amide modification.

Belongs to the melittin family. Monomer (in solution and for integration into membranes), homotetramer (in solution and potentially as a toroidal pore in membranes), and potenially homomultimer (as a toroidal pore in membranes). In terms of tissue distribution, expressed by the venom gland.

The protein localises to the secreted. It is found in the target cell membrane. Functionally, main toxin of bee venom with strong hemolytic activity and antimicrobial activity. It has enhancing effects on bee venom phospholipase A2 activity. This amphipathic toxin binds to negatively charged membrane surface and forms pore by inserting into lipid bilayers inducing the leakage of ions and molecules and the enhancement of permeability that ultimately leads to cell lysis. It acts as a voltage-gated pore with higher selectivity for anions over cations. The ion conductance has been shown to be voltage-dependent. Self-association of melittin in membranes is promoted by high ionic strength, but not by the presence of negatively charged lipids. In vivo, intradermal injection into healthy human volunteers produce sharp pain sensation and an inflammatory response. It produces pain by activating primary nociceptor cells directly and indirectly due to its ability to activate plasma membrane phospholipase A2 and its pore-forming activity. The polypeptide is Melittin (MELT) (Apis dorsata (Giant honeybee)).